A 166-amino-acid polypeptide reads, in one-letter code: uncharacterized protein (166 aa).

3 helical membrane passes run Leu-4 to Ile-24, Leu-101 to Ile-121, and Ser-146 to Leu-166.

Its subcellular location is the membrane. This is an uncharacterized protein from Saccharomyces cerevisiae (strain ATCC 204508 / S288c) (Baker's yeast).